We begin with the raw amino-acid sequence, 241 residues long: 1-(5-phosphoribosyl)-5-[(5-phosphoribosylamino)methylideneamino] imidazole-4-carboxamide isomerase (241 aa).

Asp-10 serves as the catalytic Proton acceptor. The Proton donor role is filled by Asp-131.

It belongs to the HisA/HisF family.

It is found in the cytoplasm. The enzyme catalyses 1-(5-phospho-beta-D-ribosyl)-5-[(5-phospho-beta-D-ribosylamino)methylideneamino]imidazole-4-carboxamide = 5-[(5-phospho-1-deoxy-D-ribulos-1-ylimino)methylamino]-1-(5-phospho-beta-D-ribosyl)imidazole-4-carboxamide. Its pathway is amino-acid biosynthesis; L-histidine biosynthesis; L-histidine from 5-phospho-alpha-D-ribose 1-diphosphate: step 4/9. The sequence is that of 1-(5-phosphoribosyl)-5-[(5-phosphoribosylamino)methylideneamino] imidazole-4-carboxamide isomerase from Bifidobacterium longum (strain DJO10A).